The sequence spans 72 residues: UPF0426 protein asl4034 (72 aa).

The protein belongs to the UPF0426 family.

In Nostoc sp. (strain PCC 7120 / SAG 25.82 / UTEX 2576), this protein is UPF0426 protein asl4034.